Reading from the N-terminus, the 490-residue chain is Cytochrome P450 2C13, male-specific (490 aa).

Cysteine 435 provides a ligand contact to heme.

It belongs to the cytochrome P450 family. The cofactor is heme. In terms of tissue distribution, liver, and to a lesser extent in prostate, kidney, heart and brain.

The protein localises to the endoplasmic reticulum membrane. Its subcellular location is the microsome membrane. The enzyme catalyses an organic molecule + reduced [NADPH--hemoprotein reductase] + O2 = an alcohol + oxidized [NADPH--hemoprotein reductase] + H2O + H(+). Functionally, cytochromes P450 are a group of heme-thiolate monooxygenases. In liver microsomes, this enzyme is involved in an NADPH-dependent electron transport pathway. It oxidizes a variety of structurally unrelated compounds, including steroids, fatty acids, and xenobiotics. This is Cytochrome P450 2C13, male-specific (Cyp2c13) from Rattus norvegicus (Rat).